We begin with the raw amino-acid sequence, 392 residues long: Probable tRNA pseudouridine synthase D 1 (392 aa).

Catalysis depends on D92, which acts as the Nucleophile. Residues 167-354 (YFLNYYGVQR…FIGDRRAMIG (188 aa)) form the TRUD domain.

This sequence belongs to the pseudouridine synthase TruD family.

The catalysed reaction is uridine(13) in tRNA = pseudouridine(13) in tRNA. Its function is as follows. Could be responsible for synthesis of pseudouridine from uracil-13 in transfer RNAs. The chain is Probable tRNA pseudouridine synthase D 1 from Methanocaldococcus jannaschii (strain ATCC 43067 / DSM 2661 / JAL-1 / JCM 10045 / NBRC 100440) (Methanococcus jannaschii).